The following is a 129-amino-acid chain: Small ribosomal subunit protein uS11 (129 aa).

This sequence belongs to the universal ribosomal protein uS11 family. In terms of assembly, part of the 30S ribosomal subunit. Interacts with proteins S7 and S18. Binds to IF-3.

Located on the platform of the 30S subunit, it bridges several disparate RNA helices of the 16S rRNA. Forms part of the Shine-Dalgarno cleft in the 70S ribosome. The protein is Small ribosomal subunit protein uS11 of Ectopseudomonas mendocina (strain ymp) (Pseudomonas mendocina).